A 493-amino-acid polypeptide reads, in one-letter code: Probable cytosol aminopeptidase (493 aa).

Mn(2+) contacts are provided by Lys259 and Asp264. Residue Lys271 is part of the active site. Mn(2+) is bound by residues Asp282, Asp341, and Glu343. Arg345 is a catalytic residue.

This sequence belongs to the peptidase M17 family. Requires Mn(2+) as cofactor.

The protein resides in the cytoplasm. It catalyses the reaction Release of an N-terminal amino acid, Xaa-|-Yaa-, in which Xaa is preferably Leu, but may be other amino acids including Pro although not Arg or Lys, and Yaa may be Pro. Amino acid amides and methyl esters are also readily hydrolyzed, but rates on arylamides are exceedingly low.. The enzyme catalyses Release of an N-terminal amino acid, preferentially leucine, but not glutamic or aspartic acids.. Its function is as follows. Presumably involved in the processing and regular turnover of intracellular proteins. Catalyzes the removal of unsubstituted N-terminal amino acids from various peptides. The polypeptide is Probable cytosol aminopeptidase (Bacillus cytotoxicus (strain DSM 22905 / CIP 110041 / 391-98 / NVH 391-98)).